The chain runs to 318 residues: Biotin synthase (318 aa).

The Radical SAM core domain maps to 44–273 (LCGNKFDLCT…TVQIRLAGGR (230 aa)). [4Fe-4S] cluster contacts are provided by cysteine 62, cysteine 66, and cysteine 69. Positions 106, 138, 198, and 268 each coordinate [2Fe-2S] cluster.

This sequence belongs to the radical SAM superfamily. Biotin synthase family. As to quaternary structure, homodimer. Requires [4Fe-4S] cluster as cofactor. The cofactor is [2Fe-2S] cluster.

The catalysed reaction is (4R,5S)-dethiobiotin + (sulfur carrier)-SH + 2 reduced [2Fe-2S]-[ferredoxin] + 2 S-adenosyl-L-methionine = (sulfur carrier)-H + biotin + 2 5'-deoxyadenosine + 2 L-methionine + 2 oxidized [2Fe-2S]-[ferredoxin]. It participates in cofactor biosynthesis; biotin biosynthesis; biotin from 7,8-diaminononanoate: step 2/2. Its function is as follows. Catalyzes the conversion of dethiobiotin (DTB) to biotin by the insertion of a sulfur atom into dethiobiotin via a radical-based mechanism. The chain is Biotin synthase from Clostridium botulinum (strain Langeland / NCTC 10281 / Type F).